Here is a 146-residue protein sequence, read N- to C-terminus: Snaclec stejaggregin-B subunit beta-1 (146 aa).

Residues methionine 1 to alanine 23 form the signal peptide. 3 disulfides stabilise this stretch: cysteine 25-cysteine 36, cysteine 53-cysteine 142, and cysteine 119-cysteine 134. The C-type lectin domain maps to tyrosine 32–lysine 143.

Belongs to the snaclec family. Heteromultimer; disulfide-linked. Expressed by the venom gland.

The protein localises to the secreted. Interferes with one step of hemostasis (modulation of platelet aggregation, or coagulation cascade, for example). This is Snaclec stejaggregin-B subunit beta-1 from Trimeresurus stejnegeri (Chinese green tree viper).